A 540-amino-acid polypeptide reads, in one-letter code: Zona pellucida sperm-binding protein 4 (540 aa).

The N-terminal stretch at 1-18 (MWLLRCVLLCVSLSLAVS) is a signal peptide. The Extracellular segment spans residues 19-505 (GQHKPEAPDY…EKLRVPVDSK (487 aa)). Residue Asn-69 is glycosylated (N-linked (GlcNAc...) asparagine). The 43-residue stretch at 141-183 (DWCDSIPARDRLPCAPSPISRGDCEGLGCCYSSEEVNSCYYGN) folds into the P-type domain. The ZP domain maps to 188 to 466 (HCTREGHFSI…VTCPDLSRRR (279 aa)). 3 N-linked (GlcNAc...) asparagine glycosylation sites follow: Asn-202, Asn-219, and Asn-267. A glycan (O-linked (GalNAc...) threonine) is linked at Thr-302. Cys-367 and Cys-442 are disulfide-bonded. Positions 463–540 (SRRRNFDNSS…QKSCPDQMCQ (78 aa)) are cleaved as a propeptide — removed in mature form. N-linked (GlcNAc...) asparagine glycans are attached at residues Asn-470 and Asn-474. Residues 506–526 (VLWVAGLSGTLILGALLVSYL) form a helical membrane-spanning segment. The Cytoplasmic portion of the chain corresponds to 527–540 (AVKKQKSCPDQMCQ).

Belongs to the ZP domain family. ZPB subfamily. In terms of processing, proteolytically cleaved before the transmembrane segment to yield the secreted ectodomain incorporated in the zona pellucida. As to expression, expressed in oocytes.

The protein localises to the zona pellucida. Its subcellular location is the cell membrane. Its function is as follows. Component of the zona pellucida, an extracellular matrix surrounding oocytes which mediates sperm binding, induction of the acrosome reaction and prevents post-fertilization polyspermy. The zona pellucida is composed of 3 to 4 glycoproteins, ZP1, ZP2, ZP3, and ZP4. ZP4 may act as a sperm receptor. This chain is Zona pellucida sperm-binding protein 4 (ZP4), found in Homo sapiens (Human).